We begin with the raw amino-acid sequence, 126 residues long: Fluoride-specific ion channel FluC (126 aa).

A run of 4 helical transmembrane segments spans residues leucine 2 to isoleucine 22, valine 37 to alanine 57, leucine 65 to leucine 85, and alanine 99 to methionine 119. Na(+) is bound by residues glycine 75 and threonine 78.

The protein belongs to the fluoride channel Fluc/FEX (TC 1.A.43) family.

The protein resides in the cell inner membrane. The catalysed reaction is fluoride(in) = fluoride(out). Na(+) is not transported, but it plays an essential structural role and its presence is essential for fluoride channel function. In terms of biological role, fluoride-specific ion channel. Important for reducing fluoride concentration in the cell, thus reducing its toxicity. The chain is Fluoride-specific ion channel FluC from Ruegeria sp. (strain TM1040) (Silicibacter sp.).